The sequence spans 316 residues: Apolipoprotein E (316 aa).

Positions 1–18 (MKVLWAALVVTLLAGCGA) are cleaved as a signal peptide. 8 repeat units span residues 83-104 (ALMDDTMKEVKACKSELEEQLG), 105-126 (PVTEETKARVSKELQAAQARLG), 127-148 (ADMEEVRSRLAQYRGELQAMVG), 149-170 (QSTEELRGRLSAHLRKLRKRLL), 171-192 (RDAEDLQRRLAVYQAGIREGAA), 193-214 (RSVNTLREHLGPLAEQAATVHT), 215-232 (LVSKPLQERAEAWAQRLR), and 233-254 (GRLEKAGFPVGDRLDEVREQVQ). Residues 83–254 (ALMDDTMKEV…RLDEVREQVQ (172 aa)) form an 8 X 22 AA approximate tandem repeats region. An LDL and other lipoprotein receptors binding region spans residues 161 to 171 (HLRKLRKRLLR). 165-168 (LRKR) is a heparin binding site. The segment at 213 to 289 (HTLVSKPLQE…SWFEPLVQDM (77 aa)) is lipid-binding and lipoprotein association. 228–235 (AQRLRGRL) is a binding site for heparin. The segment at 265–316 (NQVRLQAEAFQGRLKSWFEPLVQDMQQKWAELVEKVQLAVGAVPTSVPSEKQ) is homooligomerization. The interval 277 to 289 (RLKSWFEPLVQDM) is specificity for association with VLDL.

Belongs to the apolipoprotein A1/A4/E family. Homotetramer. May interact with ABCA1; functionally associated with ABCA1 in the biogenesis of HDLs. May interact with APP/A4 amyloid-beta peptide; the interaction is extremely stable in vitro but its physiological significance is unclear. May interact with MAPT. May interact with MAP2. In the cerebrospinal fluid, interacts with secreted SORL1. Interacts with PMEL; this allows the loading of PMEL luminal fragment on ILVs to induce fibril nucleation. In terms of processing, APOE exists as multiple glycosylated and sialylated glycoforms within cells and in plasma. The extent of glycosylation and sialylation are tissue and context specific. Post-translationally, glycated in plasma VLDL. Phosphorylated by FAM20C in the extracellular medium.

The protein localises to the secreted. The protein resides in the extracellular space. It localises to the extracellular matrix. It is found in the extracellular vesicle. Its subcellular location is the endosome. The protein localises to the multivesicular body. Its function is as follows. APOE is an apolipoprotein, a protein associating with lipid particles, that mainly functions in lipoprotein-mediated lipid transport between organs via the plasma and interstitial fluids. APOE is a core component of plasma lipoproteins and is involved in their production, conversion and clearance. Apolipoproteins are amphipathic molecules that interact both with lipids of the lipoprotein particle core and the aqueous environment of the plasma. As such, APOE associates with chylomicrons, chylomicron remnants, very low density lipoproteins (VLDL) and intermediate density lipoproteins (IDL) but shows a preferential binding to high-density lipoproteins (HDL). It also binds a wide range of cellular receptors including the LDL receptor/LDLR and the very low-density lipoprotein receptor/VLDLR that mediate the cellular uptake of the APOE-containing lipoprotein particles. Finally, APOE also has a heparin-binding activity and binds heparan-sulfate proteoglycans on the surface of cells, a property that supports the capture and the receptor-mediated uptake of APOE-containing lipoproteins by cells. The protein is Apolipoprotein E (APOE) of Diceros bicornis (Black rhinoceros).